The chain runs to 584 residues: Proline--tRNA ligase (584 aa).

It belongs to the class-II aminoacyl-tRNA synthetase family. ProS type 1 subfamily. Homodimer.

Its subcellular location is the cytoplasm. It catalyses the reaction tRNA(Pro) + L-proline + ATP = L-prolyl-tRNA(Pro) + AMP + diphosphate. Its function is as follows. Catalyzes the attachment of proline to tRNA(Pro) in a two-step reaction: proline is first activated by ATP to form Pro-AMP and then transferred to the acceptor end of tRNA(Pro). As ProRS can inadvertently accommodate and process non-cognate amino acids such as alanine and cysteine, to avoid such errors it has two additional distinct editing activities against alanine. One activity is designated as 'pretransfer' editing and involves the tRNA(Pro)-independent hydrolysis of activated Ala-AMP. The other activity is designated 'posttransfer' editing and involves deacylation of mischarged Ala-tRNA(Pro). The misacylated Cys-tRNA(Pro) is not edited by ProRS. This Mycobacterium sp. (strain KMS) protein is Proline--tRNA ligase.